The primary structure comprises 266 residues: Undecaprenyl-diphosphatase (266 aa).

8 consecutive transmembrane segments (helical) span residues 1 to 21, 39 to 59, 87 to 107, 111 to 131, 149 to 169, 183 to 203, 218 to 238, and 246 to 266; these read MDTF…FLPI, QGLS…VIYF, WWII…KDFI, LRSA…LWWA, ALLI…RSGA, AAAR…AILV, ALTL…HYFL, and MTPF…FIFL.

It belongs to the UppP family.

It is found in the cell inner membrane. It catalyses the reaction di-trans,octa-cis-undecaprenyl diphosphate + H2O = di-trans,octa-cis-undecaprenyl phosphate + phosphate + H(+). Functionally, catalyzes the dephosphorylation of undecaprenyl diphosphate (UPP). Confers resistance to bacitracin. This is Undecaprenyl-diphosphatase from Shewanella sp. (strain MR-4).